The sequence spans 436 residues: Chorion-specific transcription factor GCMa (436 aa).

The GCM DNA-binding region spans 14–169; sequence LSWDINDVKL…KLEAEARRAM (156 aa). Residues Cys-76, Cys-82, Cys-86, Cys-113, Cys-116, Cys-125, His-152, and His-154 each contribute to the Zn(2+) site. The interval 171 to 202 is disordered; sequence KVNTAPSSVSLSLKGSTETRSLPGETQSQGSL. Residues 174–202 show a composition bias toward polar residues; sequence TAPSSVSLSLKGSTETRSLPGETQSQGSL.

In terms of processing, polyubiquitinated in the presence of UBE2D2 and FBXW2 (in vitro). In terms of tissue distribution, highly expressed in the placenta. Expressed in trophoblast cells of the villi.

It is found in the nucleus. Functionally, transcription factor involved in the control of expression of placental growth factor (PGF) and other placenta-specific genes. Binds to the trophoblast-specific element 2 (TSE2) of the aromatase gene enhancer. Binds to the SYDE1 promoter. Has a central role in mediating the differentiation of trophoblast cells along both the villous and extravillous pathways in placental development. The polypeptide is Chorion-specific transcription factor GCMa (GCM1) (Homo sapiens (Human)).